A 181-amino-acid polypeptide reads, in one-letter code: Akirin-2 (181 aa).

The tract at residues 18-48 (SPAASPKRRRCAPLSPSGPSPQKYLRLEPSP) is disordered. Positions 23–28 (PKRRRC) match the Nuclear localization signal motif. The short motif at 178–181 (SYVS) is the SYVS motif element.

It belongs to the akirin family. Homodimer. Interacts with actl6a/baf53a. Interacts with gmnn.

It localises to the nucleus. Its function is as follows. Molecular adapter that acts as a bridge between a variety of multiprotein complexes, and which is involved in embryonic development, immunity, myogenesis and brain development. Plays a key role in nuclear protein degradation by promoting import of proteasomes into the nucleus: acts by bridging fully assembled 20S proteasomes with nuclear import receptor ipo9. Involved in both neural precursor maintenance and terminal neural differentiation: bridges gmnn and actl6a/baf53a in neural progenitor cells, antagonizing the activity of gmnn, thereby suppressing sox2 expression. Also required for proper activation of neurod1 and neuronal differentiation. Involved in myogenesis: required for skeletal muscle formation and skeletal development, possibly by regulating expression of muscle differentiation factors. The sequence is that of Akirin-2 from Xenopus laevis (African clawed frog).